We begin with the raw amino-acid sequence, 232 residues long: MRIDVVTLNPRIIESASEEGILKQALKKGLLELFVHQLRDYARDKHKTVDDRPYGGGPGMVLKCEPIFEAVEAIGWCKDKDTVVCPSPSGIKFDQQLAKDLSKRNRLIFICGQYEGIDQRVIDQLVDLEICIGDYILSSGTIAALVIIDSVVRLIPGVLGNQDSILDESFEDFLLEGPQYTRPRKFRDWEVPAVLLSGDHRRILLWRKRLSEEKTEKMRKDLWEARKKGERI.

Residues Gly-112 and Ile-132–Leu-137 contribute to the S-adenosyl-L-methionine site.

This sequence belongs to the RNA methyltransferase TrmD family. Homodimer.

It localises to the cytoplasm. The catalysed reaction is guanosine(37) in tRNA + S-adenosyl-L-methionine = N(1)-methylguanosine(37) in tRNA + S-adenosyl-L-homocysteine + H(+). Specifically methylates guanosine-37 in various tRNAs. The polypeptide is tRNA (guanine-N(1)-)-methyltransferase (Methylacidiphilum infernorum (isolate V4) (Methylokorus infernorum (strain V4))).